Here is a 246-residue protein sequence, read N- to C-terminus: Spherulin-1A (246 aa).

Residues 1–19 (MKSTFLFALFVLFLAASEA) form the signal peptide. The tract at residues 23–45 (YPTNPPTTPPTPAPTSTPLPSSA) is disordered. A compositionally biased stretch (pro residues) spans 25 to 39 (TNPPTTPPTPAPTST). Residues 74 to 220 (FDFKNSKLGV…SLNISSIQTV (147 aa)) enclose the Cupin type-1 domain. Mn(2+) contacts are provided by H123, H125, E130, and H170. Residue N213 is glycosylated (N-linked (GlcNAc...) asparagine).

This sequence belongs to the germin family.

Its subcellular location is the secreted. It is found in the cell wall. This chain is Spherulin-1A, found in Physarum polycephalum (Slime mold).